Here is an 83-residue protein sequence, read N- to C-terminus: Salivary thrombin inhibitor anophelin (83 aa).

A signal peptide spans 1 to 22 (MANKLVLISLLCVVLVAKITQA). The interval 25-51 (QYAPGDEPSYDEDTDDSDKLVENDTSI) is disordered. N-linked (GlcNAc...) asparagine glycosylation occurs at Asn47. The tract at residues 54–83 (EDYAAIEASLSETFNTAADPGRRLGEGSKP) is sufficient for host thrombin inhibition. Residues 56–62 (YAAIEAS) form a blocks exosite I of host thrombin region. Residues 64–83 (SETFNTAADPGRRLGEGSKP) are disordered. The interval 72-75 (DPGR) is blocks active site cleft of host thrombin in a reverse direction compared to substrates. Positions 73–83 (PGRRLGEGSKP) are enriched in basic and acidic residues.

Belongs to the anophelin family. In terms of assembly, interacts with human F2 (thrombin); the interaction results in thrombin inhibition. As to expression, salivary gland (at protein level).

It is found in the secreted. Its activity is regulated as follows. Increasing concentration of NaCl decreases affinity for thrombin. In terms of biological role, salivary protein with anticoagulant activity that inhibits host thrombin (F2); binds to the proteinase in a reverse orientation (opposite to substrates). Inhibits thrombin-induced platelet aggregation. In Anopheles albimanus (New world malaria mosquito), this protein is Salivary thrombin inhibitor anophelin.